The chain runs to 310 residues: MPLRLVFMGTPEFAVPTLLALAAHGHDIAAVYTREPKPAGRGMKLQETAVALAAHRLQAPVLTPKTLRTDEALANFRAHEADAAVVVAYGMILPQAILDAPELGCYNLHGSLLPRWRGAAPLNRAIMAGDAETGVMVMKMDAGLDTGDVAMAERIAITDAMTVTDVHDQLARLGADLMVRAMAALERGGLQLTKQSEDGVTYAAKIDKAEAKIDFAKPTRAVLRHIHGLSPFPGAWCELPIEGQPVRIKVLRCAIADGRGEPGEVIDDHLTIACGDGAIRVSQLQRAGKQPMTAEEFLRGTPIAKGVRVG.

Residue 111-114 (SLLP) coordinates (6S)-5,6,7,8-tetrahydrofolate.

It belongs to the Fmt family.

It catalyses the reaction L-methionyl-tRNA(fMet) + (6R)-10-formyltetrahydrofolate = N-formyl-L-methionyl-tRNA(fMet) + (6S)-5,6,7,8-tetrahydrofolate + H(+). Its function is as follows. Attaches a formyl group to the free amino group of methionyl-tRNA(fMet). The formyl group appears to play a dual role in the initiator identity of N-formylmethionyl-tRNA by promoting its recognition by IF2 and preventing the misappropriation of this tRNA by the elongation apparatus. The sequence is that of Methionyl-tRNA formyltransferase from Rhodopseudomonas palustris (strain ATCC BAA-98 / CGA009).